We begin with the raw amino-acid sequence, 406 residues long: Phosphorylase b kinase gamma catalytic chain, liver/testis isoform (406 aa).

Residues 24–291 (YDPKDIIGRG…AEQALQHPFF (268 aa)) form the Protein kinase domain. Residues 30-38 (IGRGVSSVV) and lysine 53 contribute to the ATP site. The active-site Proton acceptor is the aspartate 153. Residues 306–330 (QRFRVAVWTILAAGRVALSSHRLRP) are calmodulin-binding (domain-N). The interval 346–370 (VRRLIDNCAFRLYGHWVKKGEQQNR) is calmodulin-binding (domain-C).

It belongs to the protein kinase superfamily. CAMK Ser/Thr protein kinase family. In terms of assembly, hexadecamer of 4 heterotetramers, each composed of alpha, beta, gamma, and delta subunits. Alpha (PHKA1 or PHKA2) and beta (PHKB) are regulatory subunits, gamma (PHKG1 or PHKG2) is the catalytic subunit, and delta is calmodulin.

It catalyses the reaction 2 ATP + phosphorylase b = 2 ADP + phosphorylase a.. Catalytic subunit of the phosphorylase b kinase (PHK), which mediates the neural and hormonal regulation of glycogen breakdown (glycogenolysis) by phosphorylating and thereby activating glycogen phosphorylase. May regulate glycogeneolysis in the testis. In vitro, phosphorylates PYGM. The chain is Phosphorylase b kinase gamma catalytic chain, liver/testis isoform (Phkg2) from Rattus norvegicus (Rat).